Reading from the N-terminus, the 273-residue chain is uncharacterized protein (273 aa).

The segment covering 1 to 10 (MSSKKVKYNP) has biased composition (basic residues). Disordered stretches follow at residues 1 to 32 (MSSKKVKYNPRKSASQNEATSASAGSKAFGFN) and 50 to 124 (EDVE…QSSP). Polar residues-rich tracts occupy residues 12–24 (KSASQNEATSASA), 55–64 (QSFNGKSSNL), and 92–124 (PQSSSQKPFASSTYNVELPTSPTKITNIGQSSP). A Phosphoserine modification is found at Ser123.

Its subcellular location is the nucleus. The protein localises to the cytoplasm. It localises to the cytoskeleton. It is found in the spindle. This is an uncharacterized protein from Schizosaccharomyces pombe (strain 972 / ATCC 24843) (Fission yeast).